The sequence spans 295 residues: Host-inducible protein A (295 aa).

The segment at 1 to 20 (MHLDRSDSNGGSSRYTLDHE) is disordered.

This sequence belongs to the NopP family.

This Rhizobium fredii (Sinorhizobium fredii) protein is Host-inducible protein A.